The chain runs to 116 residues: Large ribosomal subunit protein bL17 (116 aa).

This sequence belongs to the bacterial ribosomal protein bL17 family. Part of the 50S ribosomal subunit. Contacts protein L32.

The polypeptide is Large ribosomal subunit protein bL17 (Helicobacter pylori (strain J99 / ATCC 700824) (Campylobacter pylori J99)).